We begin with the raw amino-acid sequence, 162 residues long: Interleukin-15 (162 aa).

Residues 1–29 (MRISKPYLRSTSIQCYLCLLLNSHFLAEA) form the signal peptide. A propeptide spanning residues 30–48 (GIHVFIFGCISAGLPKTEA) is cleaved from the precursor. 2 disulfides stabilise this stretch: Cys83/Cys133 and Cys90/Cys136. Residues Asn108, Asn119, Asn127, and Asn143 are each glycosylated (N-linked (GlcNAc...) asparagine).

Belongs to the IL-15/IL-21 family. Expressed in many tissues including heart, spleen, lung, liver, muscle and kidney (at mRNA level). Expressed in many tissues including heart, spleen, lung, liver, muscle and kidney (at protein level).

The protein localises to the secreted. Its function is as follows. Cytokine that plays a major role in the development of inflammatory and protective immune responses to microbial invaders and parasites by modulating immune cells of both the innate and adaptive immune systems. Stimulates the proliferation of natural killer cells, T-cells and B-cells and promotes the secretion of several cytokines. In monocytes, induces the production of IL8 and monocyte chemotactic protein 1/CCL2, two chemokines that attract neutrophils and monocytes respectively to sites of infection. Unlike most cytokines, which are secreted in soluble form, IL15 is expressed in association with its high affinity IL15RA on the surface of IL15-producing cells and delivers signals to target cells that express IL2RB and IL2RG receptor subunits. Binding to its receptor triggers the phosphorylation of JAK1 and JAK3 and the recruitment and subsequent phosphorylation of signal transducer and activator of transcription-3/STAT3 and STAT5. In mast cells, induces the rapid tyrosine phosphorylation of STAT6 and thereby controls mast cell survival and release of cytokines such as IL4. The protein is Interleukin-15 (IL15) of Oryctolagus cuniculus (Rabbit).